A 442-amino-acid polypeptide reads, in one-letter code: Histidinol dehydrogenase (442 aa).

NAD(+) contacts are provided by Tyr138, Gln196, and Asn219. 3 residues coordinate substrate: Ser245, Gln267, and His270. Zn(2+) is bound by residues Gln267 and His270. Active-site proton acceptor residues include Glu334 and His335. Substrate is bound by residues His335, Asp368, Glu422, and His427. Asp368 provides a ligand contact to Zn(2+). Residue His427 participates in Zn(2+) binding.

This sequence belongs to the histidinol dehydrogenase family. Homodimer. Zn(2+) is required as a cofactor.

The enzyme catalyses L-histidinol + 2 NAD(+) + H2O = L-histidine + 2 NADH + 3 H(+). Its pathway is amino-acid biosynthesis; L-histidine biosynthesis; L-histidine from 5-phospho-alpha-D-ribose 1-diphosphate: step 9/9. Functionally, catalyzes the sequential NAD-dependent oxidations of L-histidinol to L-histidinaldehyde and then to L-histidine. The polypeptide is Histidinol dehydrogenase (Pectobacterium atrosepticum (strain SCRI 1043 / ATCC BAA-672) (Erwinia carotovora subsp. atroseptica)).